A 377-amino-acid polypeptide reads, in one-letter code: 3-dehydroquinate synthase (377 aa).

Residues Gly113–Asp117, Thr137–Thr138, Lys150, Lys159, and Phe177–Thr180 contribute to the NAD(+) site. Residues Glu192, His254, and His273 each coordinate Zn(2+).

This sequence belongs to the sugar phosphate cyclases superfamily. Dehydroquinate synthase family. It depends on Co(2+) as a cofactor. The cofactor is Zn(2+). Requires NAD(+) as cofactor.

It is found in the cytoplasm. It carries out the reaction 7-phospho-2-dehydro-3-deoxy-D-arabino-heptonate = 3-dehydroquinate + phosphate. It functions in the pathway metabolic intermediate biosynthesis; chorismate biosynthesis; chorismate from D-erythrose 4-phosphate and phosphoenolpyruvate: step 2/7. Catalyzes the conversion of 3-deoxy-D-arabino-heptulosonate 7-phosphate (DAHP) to dehydroquinate (DHQ). The chain is 3-dehydroquinate synthase from Bartonella quintana (strain Toulouse) (Rochalimaea quintana).